A 216-amino-acid chain; its full sequence is Adenylate kinase (216 aa).

An ATP-binding site is contributed by 10-15; that stretch reads GAGKGT. The segment at 30–59 is NMP; that stretch reads STGDIFRAAIKNQTPMGVEAKKFIDKGELV. Residues threonine 31, arginine 36, 57-59, 85-88, and glutamine 92 contribute to the AMP site; these read ELV and GFPR. The interval 126–164 is LID; sequence GRFICRNCGTTYHRLYNPTKVEGTCDVCGGHDFYQRDDD. Arginine 127 is a binding site for ATP. Cysteine 130 and cysteine 133 together coordinate Zn(2+). ATP is bound at residue 136–137; the sequence is TY. Zn(2+) is bound by residues cysteine 150 and cysteine 153. Residues arginine 161 and arginine 172 each coordinate AMP. Glutamine 200 contacts ATP.

The protein belongs to the adenylate kinase family. As to quaternary structure, monomer.

It localises to the cytoplasm. The enzyme catalyses AMP + ATP = 2 ADP. It participates in purine metabolism; AMP biosynthesis via salvage pathway; AMP from ADP: step 1/1. Catalyzes the reversible transfer of the terminal phosphate group between ATP and AMP. Plays an important role in cellular energy homeostasis and in adenine nucleotide metabolism. This is Adenylate kinase from Limosilactobacillus fermentum (strain NBRC 3956 / LMG 18251) (Lactobacillus fermentum).